We begin with the raw amino-acid sequence, 102 residues long: Large ribosomal subunit protein uL24 (102 aa).

This sequence belongs to the universal ribosomal protein uL24 family. As to quaternary structure, part of the 50S ribosomal subunit.

One of two assembly initiator proteins, it binds directly to the 5'-end of the 23S rRNA, where it nucleates assembly of the 50S subunit. Its function is as follows. One of the proteins that surrounds the polypeptide exit tunnel on the outside of the subunit. This is Large ribosomal subunit protein uL24 from Polynucleobacter asymbioticus (strain DSM 18221 / CIP 109841 / QLW-P1DMWA-1) (Polynucleobacter necessarius subsp. asymbioticus).